The chain runs to 90 residues: Cell division topological specificity factor (90 aa).

Belongs to the MinE family.

Prevents the cell division inhibition by proteins MinC and MinD at internal division sites while permitting inhibition at polar sites. This ensures cell division at the proper site by restricting the formation of a division septum at the midpoint of the long axis of the cell. The sequence is that of Cell division topological specificity factor from Brucella abortus (strain S19).